Here is a 257-residue protein sequence, read N- to C-terminus: Phosphomannomutase (257 aa).

Aspartate 19 acts as the Nucleophile in catalysis. Mg(2+) contacts are provided by aspartate 19 and aspartate 21. The active-site Proton donor/acceptor is the aspartate 21. Positions 28, 133, 144, 151, 189, and 191 each coordinate alpha-D-mannose 1-phosphate. Aspartate 219, phenylalanine 231, aspartate 233, and threonine 236 together coordinate Mg(2+).

The protein belongs to the eukaryotic PMM family. Homodimer.

The protein localises to the cytoplasm. The catalysed reaction is alpha-D-mannose 1-phosphate = D-mannose 6-phosphate. It participates in nucleotide-sugar biosynthesis; GDP-alpha-D-mannose biosynthesis; alpha-D-mannose 1-phosphate from D-fructose 6-phosphate: step 2/2. Its function is as follows. Involved in the synthesis of the GDP-mannose and dolichol-phosphate-mannose required for a number of critical mannosyl transfer reactions. The protein is Phosphomannomutase (pmm1) of Schizosaccharomyces pombe (strain 972 / ATCC 24843) (Fission yeast).